Here is a 272-residue protein sequence, read N- to C-terminus: Putative phosphoenolpyruvate synthase regulatory protein (272 aa).

152–159 contacts ADP; that stretch reads GVSRSGKT.

It belongs to the pyruvate, phosphate/water dikinase regulatory protein family. PSRP subfamily.

The enzyme catalyses [pyruvate, water dikinase] + ADP = [pyruvate, water dikinase]-phosphate + AMP + H(+). The catalysed reaction is [pyruvate, water dikinase]-phosphate + phosphate + H(+) = [pyruvate, water dikinase] + diphosphate. Its function is as follows. Bifunctional serine/threonine kinase and phosphorylase involved in the regulation of the phosphoenolpyruvate synthase (PEPS) by catalyzing its phosphorylation/dephosphorylation. This chain is Putative phosphoenolpyruvate synthase regulatory protein, found in Alcanivorax borkumensis (strain ATCC 700651 / DSM 11573 / NCIMB 13689 / SK2).